The primary structure comprises 230 residues: Large ribosomal subunit protein uL1 (230 aa).

The protein belongs to the universal ribosomal protein uL1 family. Part of the 50S ribosomal subunit.

Binds directly to 23S rRNA. The L1 stalk is quite mobile in the ribosome, and is involved in E site tRNA release. In terms of biological role, protein L1 is also a translational repressor protein, it controls the translation of the L11 operon by binding to its mRNA. The protein is Large ribosomal subunit protein uL1 of Gluconobacter oxydans (strain 621H) (Gluconobacter suboxydans).